The following is a 638-amino-acid chain: 1,4-alpha-glucan branching enzyme GlgB (638 aa).

Asp320 acts as the Nucleophile in catalysis. Glu373 acts as the Proton donor in catalysis.

This sequence belongs to the glycosyl hydrolase 13 family. GlgB subfamily. In terms of assembly, monomer.

It carries out the reaction Transfers a segment of a (1-&gt;4)-alpha-D-glucan chain to a primary hydroxy group in a similar glucan chain.. It participates in glycan biosynthesis; glycogen biosynthesis. Its function is as follows. Catalyzes the formation of the alpha-1,6-glucosidic linkages in glycogen by scission of a 1,4-alpha-linked oligosaccharide from growing alpha-1,4-glucan chains and the subsequent attachment of the oligosaccharide to the alpha-1,6 position. This chain is 1,4-alpha-glucan branching enzyme GlgB, found in Oleidesulfovibrio alaskensis (strain ATCC BAA-1058 / DSM 17464 / G20) (Desulfovibrio alaskensis).